The chain runs to 213 residues: Octanoyltransferase (213 aa).

In terms of domain architecture, BPL/LPL catalytic spans 35–213 (DKHGDAVLLL…ERHLPTLVGA (179 aa)). Residues 73–80 (RGGKITWH), 145–147 (AIG), and 158–160 (GFS) each bind substrate. Catalysis depends on C176, which acts as the Acyl-thioester intermediate.

The protein belongs to the LipB family.

The protein resides in the cytoplasm. It carries out the reaction octanoyl-[ACP] + L-lysyl-[protein] = N(6)-octanoyl-L-lysyl-[protein] + holo-[ACP] + H(+). It participates in protein modification; protein lipoylation via endogenous pathway; protein N(6)-(lipoyl)lysine from octanoyl-[acyl-carrier-protein]: step 1/2. Catalyzes the transfer of endogenously produced octanoic acid from octanoyl-acyl-carrier-protein onto the lipoyl domains of lipoate-dependent enzymes. Lipoyl-ACP can also act as a substrate although octanoyl-ACP is likely to be the physiological substrate. This Salinispora arenicola (strain CNS-205) protein is Octanoyltransferase.